The sequence spans 62 residues: Ponericin-W-like 32.2 (62 aa).

The N-terminal stretch at 1–23 is a signal peptide; the sequence is MKCKKQLLVIFFAYFLVVNESEA. A propeptide spanning residues 49–62 is cleaved from the precursor; that stretch reads RALMKRDLEDIMDP.

It belongs to the non-disulfide-bridged peptide (NDBP) superfamily. Medium-length antimicrobial peptide (group 3) family. Ponericin-W subfamily. In terms of tissue distribution, expressed by the venom gland.

The protein localises to the secreted. It localises to the target cell membrane. In terms of biological role, antimicrobial peptide with potent activity against a range of Gram-positive and Gram-negative bacteria. Has high hemolytic activity against erythrocytes. May act by disrupting the integrity of the bacterial cell membrane. This chain is Ponericin-W-like 32.2, found in Lychas mucronatus (Chinese swimming scorpion).